Reading from the N-terminus, the 898-residue chain is Serine/threonine-protein kinase TAO3 (898 aa).

A Protein kinase domain is found at 24 to 277; that stretch reads FIDLHEIGHG…AVELLRHDFI (254 aa). Residues 30-38 and K53 each bind ATP; that span reads IGHGSFGAV. D147 serves as the catalytic Proton acceptor. 2 disordered regions span residues 316–375 and 405–424; these read TRNG…DESS and DEAGHGDPRPEPRPTQSVQS. Residue S324 is modified to Phosphoserine; by ATM. Phosphoserine occurs at positions 343, 346, and 349. The span at 349–366 shows a compositional bias: low complexity; it reads SIPSTSVSTGSRSSSVNS. At T357 the chain carries Phosphothreonine. S359 carries the post-translational modification Phosphoserine. The segment covering 405–416 has biased composition (basic and acidic residues); it reads DEAGHGDPRPEP. S442 carries the post-translational modification Phosphoserine. Coiled coils occupy residues 452 to 502, 548 to 649, and 754 to 871; these read EQEN…THAN, FLES…HAML, and LKTL…QERE. The tract at residues 565-596 is disordered; sequence EEMNEDHSTPKKEKQERISKHKENLQHTQAEE. N6-acetyllysine is present on K830.

It belongs to the protein kinase superfamily. STE Ser/Thr protein kinase family. STE20 subfamily. In terms of assembly, self-associates. Interacts with ERN1 and TRAF2. Interaction with TRAF2 is facilitated under ER stress conditions, such as treatment with tunicamycin, and may promote TRAF2 phosphorylation. Interacts (via N-terminus) with STK25; the interaction promotes STK25 abundance at the level of protein expression and/or stability. In terms of processing, autophosphorylated. Phosphorylation at Ser-324 by ATM following DNA damage is required for activation of the p38/MAPK14 stress-activated MAPK cascade. Phosphorylated at Ser-324 and on Tyr residues during T cell activation. Phosphorylated by LRRK2.

It is found in the cytoplasm. The protein resides in the cell membrane. The protein localises to the membrane raft. It localises to the lipid droplet. The catalysed reaction is L-seryl-[protein] + ATP = O-phospho-L-seryl-[protein] + ADP + H(+). It catalyses the reaction L-threonyl-[protein] + ATP = O-phospho-L-threonyl-[protein] + ADP + H(+). Serine/threonine-protein kinase that acts as a regulator of the p38/MAPK14 stress-activated MAPK cascade and of the MAPK8/JNK cascade. In response to DNA damage, involved in the G2/M transition DNA damage checkpoint by activating the p38/MAPK14 stress-activated MAPK cascade, probably by mediating phosphorylation of upstream MAP2K3 and MAP2K6 kinases. Inhibits basal activity of the MAPK8/JNK cascade and diminishes its activation in response to epidermal growth factor (EGF). Positively regulates canonical T cell receptor (TCR) signaling by preventing early PTPN6/SHP1-mediated inactivation of LCK, ensuring sustained TCR signaling that is required for optimal activation and differentiation of T cells. Phosphorylates PTPN6/SHP1 on 'Thr-394', leading to its polyubiquitination and subsequent proteasomal degradation. Required for cell surface expression of metalloprotease ADAM10 on type 1 transitional B cells which is necessary for their NOTCH-mediated development into marginal zone B cells. Also required for the NOTCH-mediated terminal differentiation of splenic conventional type 2 dendritic cells. Positively regulates osteoblast differentiation by acting as an upstream activator of the JNK pathway. Promotes JNK signaling in hepatocytes and positively regulates hepatocyte lipid storage by inhibiting beta-oxidation and triacylglycerol secretion while enhancing lipid synthesis. Restricts age-associated inflammation by negatively regulating differentiation of macrophages and their production of pro-inflammatory cytokines. Plays a role in negatively regulating the abundance of regulatory T cells in white adipose tissue. The protein is Serine/threonine-protein kinase TAO3 (Taok3) of Mus musculus (Mouse).